Here is a 703-residue protein sequence, read N- to C-terminus: FERM domain-containing protein 7 (703 aa).

In terms of domain architecture, FERM spans 2–282 (LHLKVQFLDD…EYHAFFRLSE (281 aa)). A coiled-coil region spans residues 525–552 (RNMRIKSLQQDLQELQEAMARTSGRSNI).

In terms of tissue distribution, in the developing cerebral cortex, strong expression is observed in the ventricular and intermediate zones at 13 and 17 dpc. At 17 dpc and P0, expression appears to be restricted to the cortical plate. In neonates, highly expressed in cortex, hippocampus, cerebellum, olfactory bulb and eye with little or no expression in liver, kidney, skeletal muscle or heart muscle (at protein level).

It localises to the cell projection. The protein localises to the neuron projection. Its subcellular location is the growth cone. Its function is as follows. Plays a role in neurite development, may be through the activation of the GTPase RAC1. Plays a role in the control of eye movement and gaze stability. The polypeptide is FERM domain-containing protein 7 (Mus musculus (Mouse)).